A 365-amino-acid chain; its full sequence is Outer capsid protein sigma-3 (365 aa).

A CCHC-type zinc finger spans residues 51–73; that stretch reads CMHCLGVVGSLQRKLKHLPHHRC.

Belongs to the orthoreovirus sigma-3 protein family. In terms of assembly, heterohexamer of three sigma-3 and three Mu-1 proteins. The RNA-binding form is probably a homodimer. In terms of processing, cleaved during virus the endosomal proteolytic disassembly of the outer capsid.

It localises to the virion. Functionally, stimulates translation by blocking the activation of the dsRNA-dependent protein kinase EIF2AK2/PKR, thereby inhibiting the host interferon response. Sigma3 prevents the activation of EIF2AK2 by competing with the kinase for dsRNA-binding. In terms of biological role, the viral outer shell polypeptides, of which sigma-3 is one, impose structural constraints that prevent elongation of nascent transcripts by the RNA-dependent RNA polymerase lambda-3. The protein is Outer capsid protein sigma-3 (S4) of Mammalia (T1L).